The primary structure comprises 343 residues: Transmembrane protein 120A (343 aa).

The Cytoplasmic segment spans residues 1-135; it reads MQSPPPDPLG…KFAYKDEYEK (135 aa). Lys-130 contacts CoA. The chain crosses the membrane as a helical span at residues 136-156; sequence FKLYLTIILIVISFTCRFLLN. Topologically, residues 157–162 are extracellular; the sequence is SRVTDA. A helical transmembrane segment spans residues 163 to 183; sequence AFNFLLVWYYCTLTIRESILI. Residues 184 to 190 are Cytoplasmic-facing; the sequence is NNGSRIK. CoA is bound by residues Ser-187 and Arg-188. A helical transmembrane segment spans residues 191 to 211; that stretch reads GWWVFHHYVSTFLSGVMLTWP. Over 212–222 the chain is Extracellular; sequence DGLMYQKFRNQ. Residues 223–240 form a helical membrane-spanning segment; that stretch reads FLSFSMYQSFVQFLQYYY. Residues Gln-237, Tyr-240, Gln-241, and His-283 each contribute to the CoA site. Over 241–273 the chain is Cytoplasmic; it reads QSGCLYRLRALGERHTMDLTVEGFQSWMWRGLT. A helical transmembrane segment spans residues 274-294; sequence FLLPFLFFGHFWQLFNALTLF. Residues 295 to 305 are Extracellular-facing; that stretch reads NLARDPECKEW. The helical transmembrane segment at 306-326 threads the bilayer; sequence QVLMCGFPFLLLFLGNFFTTL. Over 327–343 the chain is Cytoplasmic; that stretch reads RVVHQKFHSQQHGNKKD. A CoA-binding site is contributed by Lys-332.

The protein belongs to the TMEM120 family. As to quaternary structure, homodimer. Forms heterooligomer with TMEM120B. Interacts with PKD2; TMEM120A inhibits PKD2 channel activity through the physical association of PKD2 with TMEM120A. As to expression, widely expressed, with higher expression in the heart, kidneys, colon and sensory neurons of the dorsal root ganglia. Expressed in nociceptors. Highly expressed in white adipose tissue (at protein level). Highly expressed in brown adipose tissue and expressed at low levels in liver.

It is found in the cell membrane. The protein resides in the nucleus envelope. The protein localises to the nucleus inner membrane. Its subcellular location is the endoplasmic reticulum. Its function is as follows. Multifunctional protein involved in mechanosensation, and plays an essential role in lipid metabolism and adipocyte differentiation. May function as a potential ion channel involved in sensing mechanical stimuli. Mediates the mechanosensitivity of the PKD2-TMEM120A channel complex through direct physical interaction. TMEM120A seems to affect mechanosensation by inhibiting PIEZO2 channels, possibly by altering cellular lipid content. TMEM120A is structurally similar to a lipid-modifying enzyme, ELOVL7, and contains a bound coenzyme A molecule, which suggests it might function as an enzyme in lipid metabolism. The chain is Transmembrane protein 120A from Mus musculus (Mouse).